A 236-amino-acid chain; its full sequence is MTPRLFALIPCAGTGSRSGSAVPKQYRTLAGRALLHYTLAAFDACTEFAQTLVVLAPDDSHFDARRFAGLRFAVRRCGGGSRQASVLNGLLELAEFGATDHDWVLVHDAARPGITPELIRTLVATLKDDPVGGIVALPVADTLKRVPAGGDAIARTESRDALWQAQTPQMFRIGMLREAILRAQREGHDLTDEASAIEWAGHTPRVVQGSLRNFKVTYPEDFALAEAILARPANAS.

The protein belongs to the IspD/TarI cytidylyltransferase family. IspD subfamily.

The catalysed reaction is 2-C-methyl-D-erythritol 4-phosphate + CTP + H(+) = 4-CDP-2-C-methyl-D-erythritol + diphosphate. Its pathway is isoprenoid biosynthesis; isopentenyl diphosphate biosynthesis via DXP pathway; isopentenyl diphosphate from 1-deoxy-D-xylulose 5-phosphate: step 2/6. In terms of biological role, catalyzes the formation of 4-diphosphocytidyl-2-C-methyl-D-erythritol from CTP and 2-C-methyl-D-erythritol 4-phosphate (MEP). The protein is 2-C-methyl-D-erythritol 4-phosphate cytidylyltransferase of Burkholderia cenocepacia (strain ATCC BAA-245 / DSM 16553 / LMG 16656 / NCTC 13227 / J2315 / CF5610) (Burkholderia cepacia (strain J2315)).